Reading from the N-terminus, the 338-residue chain is Phenylalanine--tRNA ligase alpha subunit (338 aa).

Mg(2+) is bound at residue Glu-252.

Belongs to the class-II aminoacyl-tRNA synthetase family. Phe-tRNA synthetase alpha subunit type 1 subfamily. In terms of assembly, tetramer of two alpha and two beta subunits. It depends on Mg(2+) as a cofactor.

It is found in the cytoplasm. The enzyme catalyses tRNA(Phe) + L-phenylalanine + ATP = L-phenylalanyl-tRNA(Phe) + AMP + diphosphate + H(+). The sequence is that of Phenylalanine--tRNA ligase alpha subunit from Azotobacter vinelandii (strain DJ / ATCC BAA-1303).